The chain runs to 287 residues: tRNA pseudouridine synthase B (287 aa).

Aspartate 38 serves as the catalytic Nucleophile.

Belongs to the pseudouridine synthase TruB family. Type 1 subfamily.

The catalysed reaction is uridine(55) in tRNA = pseudouridine(55) in tRNA. In terms of biological role, responsible for synthesis of pseudouridine from uracil-55 in the psi GC loop of transfer RNAs. The protein is tRNA pseudouridine synthase B of Aquifex aeolicus (strain VF5).